The primary structure comprises 273 residues: Protein FAM210A (273 aa).

Residues 95–116 (VLSSSSTSQETPSEKKEEPDPL) form a disordered region. Over residues 106–116 (PSEKKEEPDPL) the composition is skewed to basic and acidic residues. A DUF1279 domain is found at 118-230 (DKSISLYQRF…GYMSTPPPVK (113 aa)). Residues 138-158 (LIPVHLITSGIWFGTFYYASI) form a helical membrane-spanning segment. Residues 233–272 (LQGRMEETKELISEKMEETKDRLTEKLQETKEKVSFKKKV) are a coiled coil. The disordered stretch occupies residues 247-273 (KMEETKDRLTEKLQETKEKVSFKKKVE).

The protein belongs to the FAM210 family. Interacts with ATAD3A.

The protein localises to the membrane. It localises to the mitochondrion. The protein resides in the cytoplasm. In terms of biological role, may play a role in the structure and strength of both muscle and bone. The polypeptide is Protein FAM210A (Fam210a) (Rattus norvegicus (Rat)).